Consider the following 295-residue polypeptide: Aspartate carbamoyltransferase catalytic subunit (295 aa).

The carbamoyl phosphate site is built by Arg49 and Thr50. Residue Lys77 coordinates L-aspartate. 3 residues coordinate carbamoyl phosphate: Arg99, His127, and Gln130. The L-aspartate site is built by Arg161 and Arg212. 2 residues coordinate carbamoyl phosphate: Gly251 and Pro252.

This sequence belongs to the aspartate/ornithine carbamoyltransferase superfamily. ATCase family. In terms of assembly, heterododecamer (2C3:3R2) of six catalytic PyrB chains organized as two trimers (C3), and six regulatory PyrI chains organized as three dimers (R2).

The enzyme catalyses carbamoyl phosphate + L-aspartate = N-carbamoyl-L-aspartate + phosphate + H(+). It participates in pyrimidine metabolism; UMP biosynthesis via de novo pathway; (S)-dihydroorotate from bicarbonate: step 2/3. Functionally, catalyzes the condensation of carbamoyl phosphate and aspartate to form carbamoyl aspartate and inorganic phosphate, the committed step in the de novo pyrimidine nucleotide biosynthesis pathway. This chain is Aspartate carbamoyltransferase catalytic subunit, found in Campylobacter jejuni subsp. doylei (strain ATCC BAA-1458 / RM4099 / 269.97).